Consider the following 208-residue polypeptide: NAD(P)H-quinone oxidoreductase subunit I (208 aa).

4Fe-4S ferredoxin-type domains are found at residues 55–84 and 95–124; these read GRIH…VDWV and RNYS…MTEE. Residues cysteine 64, cysteine 67, cysteine 70, cysteine 74, cysteine 104, cysteine 107, cysteine 110, and cysteine 114 each contribute to the [4Fe-4S] cluster site.

Belongs to the complex I 23 kDa subunit family. In terms of assembly, NDH-1 is composed of at least 11 different subunits. [4Fe-4S] cluster serves as cofactor.

The protein localises to the cellular thylakoid membrane. It catalyses the reaction a plastoquinone + NADH + (n+1) H(+)(in) = a plastoquinol + NAD(+) + n H(+)(out). It carries out the reaction a plastoquinone + NADPH + (n+1) H(+)(in) = a plastoquinol + NADP(+) + n H(+)(out). In terms of biological role, NDH-1 shuttles electrons from an unknown electron donor, via FMN and iron-sulfur (Fe-S) centers, to quinones in the respiratory and/or the photosynthetic chain. The immediate electron acceptor for the enzyme in this species is believed to be plastoquinone. Couples the redox reaction to proton translocation, and thus conserves the redox energy in a proton gradient. In Prochlorococcus marinus (strain MIT 9301), this protein is NAD(P)H-quinone oxidoreductase subunit I.